A 187-amino-acid chain; its full sequence is Elongation factor P (187 aa).

Belongs to the elongation factor P family.

The protein resides in the cytoplasm. The protein operates within protein biosynthesis; polypeptide chain elongation. Its function is as follows. Involved in peptide bond synthesis. Stimulates efficient translation and peptide-bond synthesis on native or reconstituted 70S ribosomes in vitro. Probably functions indirectly by altering the affinity of the ribosome for aminoacyl-tRNA, thus increasing their reactivity as acceptors for peptidyl transferase. The chain is Elongation factor P (efp) from Mycobacterium bovis (strain ATCC BAA-935 / AF2122/97).